We begin with the raw amino-acid sequence, 236 residues long: UPF0257 lipoprotein YnfC (236 aa).

A signal peptide spans 1 to 16; it reads MKKPLLLTLLCMILAG. A lipid anchor (N-palmitoyl cysteine) is attached at cysteine 17. Cysteine 17 is lipidated: S-diacylglycerol cysteine.

The protein belongs to the UPF0257 family.

Its subcellular location is the cell membrane. The polypeptide is UPF0257 lipoprotein YnfC (Salmonella dublin (strain CT_02021853)).